The chain runs to 912 residues: Protein translocase subunit SecA (912 aa).

Residues Gln87, 105–109 (GEGKT), and Asp508 each bind ATP. The interval 855–912 (QHQDAGGYGADEEVEQMQGGNAPVPVSQVTRDEPKVGRNDPCPCGSGKKYKHCHGQLS) is disordered. Zn(2+)-binding residues include Cys896, Cys898, Cys907, and His908. Over residues 902-912 (KKYKHCHGQLS) the composition is skewed to basic residues.

The protein belongs to the SecA family. In terms of assembly, monomer and homodimer. Part of the essential Sec protein translocation apparatus which comprises SecA, SecYEG and auxiliary proteins SecDF-YajC and YidC. The cofactor is Zn(2+).

It is found in the cell inner membrane. Its subcellular location is the cytoplasm. The catalysed reaction is ATP + H2O + cellular proteinSide 1 = ADP + phosphate + cellular proteinSide 2.. Functionally, part of the Sec protein translocase complex. Interacts with the SecYEG preprotein conducting channel. Has a central role in coupling the hydrolysis of ATP to the transfer of proteins into and across the cell membrane, serving both as a receptor for the preprotein-SecB complex and as an ATP-driven molecular motor driving the stepwise translocation of polypeptide chains across the membrane. This chain is Protein translocase subunit SecA, found in Xanthomonas campestris pv. campestris (strain 8004).